Here is a 50-residue protein sequence, read N- to C-terminus: Large ribosomal subunit protein eL39 (50 aa).

It belongs to the eukaryotic ribosomal protein eL39 family. Part of the 50S ribosomal subunit. Interacts weakly with protein L23.

Binds to the 23S rRNA. Forms part of the polypeptide exit tunnel. This is Large ribosomal subunit protein eL39 (rpl39e) from Haloarcula marismortui (strain ATCC 43049 / DSM 3752 / JCM 8966 / VKM B-1809) (Halobacterium marismortui).